We begin with the raw amino-acid sequence, 92 residues long: Small ribosomal subunit protein bS20 (92 aa).

Disordered regions lie at residues Met1–Lys25 and His68–Ala92. Low complexity predominate over residues Ala80 to Ala92.

It belongs to the bacterial ribosomal protein bS20 family.

Functionally, binds directly to 16S ribosomal RNA. This chain is Small ribosomal subunit protein bS20, found in Deinococcus radiodurans (strain ATCC 13939 / DSM 20539 / JCM 16871 / CCUG 27074 / LMG 4051 / NBRC 15346 / NCIMB 9279 / VKM B-1422 / R1).